The sequence spans 320 residues: Fructose-1,6-bisphosphatase class 1 (320 aa).

Residues glutamate 84, aspartate 103, leucine 105, and aspartate 106 each contribute to the Mg(2+) site. Residues 106–109, asparagine 196, and lysine 262 contribute to the substrate site; that span reads DGSS. Mg(2+) is bound at residue glutamate 268.

The protein belongs to the FBPase class 1 family. In terms of assembly, homotetramer. Requires Mg(2+) as cofactor.

The protein resides in the cytoplasm. It catalyses the reaction beta-D-fructose 1,6-bisphosphate + H2O = beta-D-fructose 6-phosphate + phosphate. It participates in carbohydrate biosynthesis; gluconeogenesis. This Shewanella amazonensis (strain ATCC BAA-1098 / SB2B) protein is Fructose-1,6-bisphosphatase class 1.